A 295-amino-acid chain; its full sequence is Aspartate carbamoyltransferase catalytic subunit (295 aa).

Residues Arg-49 and Thr-50 each contribute to the carbamoyl phosphate site. An L-aspartate-binding site is contributed by Lys-77. Positions 99, 127, and 130 each coordinate carbamoyl phosphate. 2 residues coordinate L-aspartate: Arg-161 and Arg-212. Carbamoyl phosphate-binding residues include Gly-251 and Pro-252.

Belongs to the aspartate/ornithine carbamoyltransferase superfamily. ATCase family. Heterododecamer (2C3:3R2) of six catalytic PyrB chains organized as two trimers (C3), and six regulatory PyrI chains organized as three dimers (R2).

It catalyses the reaction carbamoyl phosphate + L-aspartate = N-carbamoyl-L-aspartate + phosphate + H(+). Its pathway is pyrimidine metabolism; UMP biosynthesis via de novo pathway; (S)-dihydroorotate from bicarbonate: step 2/3. In terms of biological role, catalyzes the condensation of carbamoyl phosphate and aspartate to form carbamoyl aspartate and inorganic phosphate, the committed step in the de novo pyrimidine nucleotide biosynthesis pathway. This is Aspartate carbamoyltransferase catalytic subunit from Aliarcobacter butzleri (strain RM4018) (Arcobacter butzleri).